Reading from the N-terminus, the 102-residue chain is C-X-C motif chemokine 10 (102 aa).

Residues 1-19 form the signal peptide; it reads MNKSGFLIFCLILLTLSQG. Arg-24 bears the Citrulline mark. 2 disulfides stabilise this stretch: Cys-28–Cys-55 and Cys-30–Cys-72.

Belongs to the intercrine alpha (chemokine CxC) family. As to quaternary structure, monomer, dimer, and tetramer. Interacts with CXCR3 (via N-terminus).

The protein resides in the secreted. Pro-inflammatory cytokine that is involved in a wide variety of processes such as chemotaxis, differentiation, and activation of peripheral immune cells, regulation of cell growth, apoptosis and modulation of angiostatic effects. Plays thereby an important role during viral infections by stimulating the activation and migration of immune cells to the infected sites. Mechanistically, binding of CXCL10 to the CXCR3 receptor activates G protein-mediated signaling and results in downstream activation of phospholipase C-dependent pathway, an increase in intracellular calcium production and actin reorganization. In turn, recruitment of activated Th1 lymphocytes occurs at sites of inflammation. Activation of the CXCL10/CXCR3 axis also plays an important role in neurons in response to brain injury for activating microglia, the resident macrophage population of the central nervous system, and directing them to the lesion site. This recruitment is an essential element for neuronal reorganization. This Bos taurus (Bovine) protein is C-X-C motif chemokine 10 (CXCL10).